Consider the following 322-residue polypeptide: Replication factor C small subunit (322 aa).

Gly46–Thr53 lines the ATP pocket.

This sequence belongs to the activator 1 small subunits family. RfcS subfamily. Heteromultimer composed of small subunits (RfcS) and large subunits (RfcL).

Part of the RFC clamp loader complex which loads the PCNA sliding clamp onto DNA. The polypeptide is Replication factor C small subunit (Methanoregula boonei (strain DSM 21154 / JCM 14090 / 6A8)).